Consider the following 412-residue polypeptide: Multifunctional CCA protein (412 aa).

ATP-binding residues include glycine 8 and arginine 11. 2 residues coordinate CTP: glycine 8 and arginine 11. 2 residues coordinate Mg(2+): aspartate 21 and aspartate 23. The ATP site is built by arginine 91, arginine 137, and arginine 140. The CTP site is built by arginine 91, arginine 137, and arginine 140. One can recognise an HD domain in the interval 228–329; that stretch reads TGIHTLMTLS…VKLFDSIDAW (102 aa).

The protein belongs to the tRNA nucleotidyltransferase/poly(A) polymerase family. Bacterial CCA-adding enzyme type 1 subfamily. Monomer. Can also form homodimers and oligomers. The cofactor is Mg(2+). Requires Ni(2+) as cofactor.

The enzyme catalyses a tRNA precursor + 2 CTP + ATP = a tRNA with a 3' CCA end + 3 diphosphate. The catalysed reaction is a tRNA with a 3' CCA end + 2 CTP + ATP = a tRNA with a 3' CCACCA end + 3 diphosphate. Catalyzes the addition and repair of the essential 3'-terminal CCA sequence in tRNAs without using a nucleic acid template. Adds these three nucleotides in the order of C, C, and A to the tRNA nucleotide-73, using CTP and ATP as substrates and producing inorganic pyrophosphate. tRNA 3'-terminal CCA addition is required both for tRNA processing and repair. Also involved in tRNA surveillance by mediating tandem CCA addition to generate a CCACCA at the 3' terminus of unstable tRNAs. While stable tRNAs receive only 3'-terminal CCA, unstable tRNAs are marked with CCACCA and rapidly degraded. The protein is Multifunctional CCA protein of Escherichia coli O8 (strain IAI1).